We begin with the raw amino-acid sequence, 355 residues long: Putative inositol monophosphatase 3 (355 aa).

The chain crosses the membrane as a helical span at residues 16-36 (LPATIVAILLTFVLVYFLNFH). Positions 127, 167, 169, 170, and 292 each coordinate Mg(2+). Glutamate 127 serves as a coordination point for substrate. Substrate contacts are provided by residues 169–172 (LDAT) and aspartate 292.

The protein belongs to the inositol monophosphatase superfamily. The cofactor is Mg(2+).

It localises to the membrane. It catalyses the reaction a myo-inositol phosphate + H2O = myo-inositol + phosphate. Its pathway is polyol metabolism; myo-inositol biosynthesis; myo-inositol from D-glucose 6-phosphate: step 2/2. The chain is Putative inositol monophosphatase 3 from Drosophila melanogaster (Fruit fly).